The chain runs to 517 residues: Protein disulfide-isomerase EUG1 (517 aa).

An N-terminal signal peptide occupies residues 1-29 (MQVTTRFISAIVSFCLFASFTLAENSARA). A Thioredoxin 1 domain is found at 30–141 (TPGSDLLVLT…ITQYMIQLYE (112 aa)). 5 N-linked (GlcNAc...) asparagine glycosylation sites follow: Asn-159, Asn-174, Asn-207, Asn-293, and Asn-462. The Thioredoxin 2 domain maps to 355 to 487 (YREGTAKPIV…VFEFIKESGT (133 aa)). The Prevents secretion from ER signature appears at 514–517 (HDEL).

The protein belongs to the protein disulfide isomerase family. Interacts with EPS1. Post-translationally, may have O-linked mannose residues.

It is found in the endoplasmic reticulum lumen. It catalyses the reaction Catalyzes the rearrangement of -S-S- bonds in proteins.. Its function is as follows. Probably interacts with nascent polypeptides in the endoplasmic reticulum. It is an essential gene only in the absence of PDI. Its native disulfide isomerase activity is very low. The polypeptide is Protein disulfide-isomerase EUG1 (EUG1) (Saccharomyces cerevisiae (strain ATCC 204508 / S288c) (Baker's yeast)).